The sequence spans 294 residues: MITGIINLKKEAGMTSHDAVFKLRKILHTKKIGHGGTLDPDVVGVLPIAVGKATRVIEYMTESGKIYEGEITLGYATSTEDSSGEVISRTPLTQSDLSEDVVDHAMKSFTGPITQVPPMYSAVKVNGKKLYEYARSGEEVERPKRQITISEFRRTSPLYFEKGICRFSFYVSCSKGTYVRTLAVDLGIKLGYASHMSFLKRTSSAGLSITQSLTLEEINEKYKQEDFSFLLPIEYGVLDLPKVNLTEEDKVEISYGRRILLENEADTLAAFYENRVIAILEKRGNEFKPHKVLL.

Catalysis depends on Asp-39, which acts as the Nucleophile.

It belongs to the pseudouridine synthase TruB family. Type 1 subfamily.

The catalysed reaction is uridine(55) in tRNA = pseudouridine(55) in tRNA. Its function is as follows. Responsible for synthesis of pseudouridine from uracil-55 in the psi GC loop of transfer RNAs. The chain is tRNA pseudouridine synthase B from Streptococcus agalactiae serotype Ia (strain ATCC 27591 / A909 / CDC SS700).